The following is an 897-amino-acid chain: Cytokine receptor common subunit beta (897 aa).

The first 16 residues, 1 to 16 (MVLAQGLLSMALLALC), serve as a signal peptide directing secretion. The Extracellular segment spans residues 17 to 443 (WERSLAGAEE…WDTESVLPMW (427 aa)). A disulfide bond links Cys-35 and Cys-45. Asn-58 carries an N-linked (GlcNAc...) asparagine glycan. 2 disulfides stabilise this stretch: Cys-75–Cys-96 and Cys-86–Cys-91. The Fibronectin type-III 1 domain maps to 133–240 (PPEPRDLQIS…PEVCWDSQPG (108 aa)). Asn-191 carries an N-linked (GlcNAc...) asparagine glycan. 2 disulfides stabilise this stretch: Cys-250–Cys-260 and Cys-289–Cys-306. The Fibronectin type-III 2 domain maps to 339 to 436 (QMAPPSLNVT…EWSEARSWDT (98 aa)). A glycan (N-linked (GlcNAc...) asparagine) is linked at Asn-346. The WSXWS motif motif lies at 425-429 (WSEWS). A helical membrane pass occupies residues 444-460 (VLALIVIFLTIAVLLAL). Over 461 to 897 (RFCGIYGYRL…WEVNKPGEVC (437 aa)) the chain is Cytoplasmic. The Box 1 motif signature appears at 474 to 482 (WEEKIPNPS). Disordered regions lie at residues 498–517 (GSMS…WGSR), 532–630 (SEVS…EYLC), 648–812 (PGQA…QPEG), and 830–849 (PGPL…PEIK). Pro residues predominate over residues 564–574 (EQPPSPQPGPP). The span at 723–752 (SGASSVSLVPSLGLPSDQTPSLCPGLASGP) shows a compositional bias: low complexity. Phosphotyrosine is present on Tyr-766. Over residues 830–840 (PGPLSLRSKPS) the composition is skewed to low complexity.

This sequence belongs to the type I cytokine receptor family. Type 4 subfamily. In terms of assembly, heterodimer of an alpha and a beta subunit. The beta subunit is common to the IL3, IL5 and GM-CSF receptors. The signaling GM-CSF receptor complex is a dodecamer of two head-to-head hexamers of two alpha, two beta, and two ligand subunits. Interacts with TMEM102; this interaction occurs preferentially in the absence of CSF2. Interacts with FCER1G; this interaction is direct. Interacts with LYN. Interacts with JAK1. May be phosphorylated by LYN.

Its subcellular location is the membrane. Its function is as follows. Cell surface receptor that plays a role in immune response and controls the production and differentiation of hematopoietic progenitor cells into lineage-restricted cells. Acts by forming an heterodimeric receptor through interaction with different partners such as IL3RA, IL5RA or CSF2RA. In turn, participates in various signaling pathways including interleukin-3, interleukin-5 and granulocyte-macrophage colony-stimulating factor/CSF2 pathways. In unstimulated conditions, interacts constitutively with JAK1 and ligand binding leads to JAK1 stimulation and subsequent activation of the JAK-STAT pathway. The chain is Cytokine receptor common subunit beta (CSF2RB) from Homo sapiens (Human).